The sequence spans 364 residues: Fructose-bisphosphate aldolase B (364 aa).

Residue A2 is modified to N-acetylalanine. K13 carries the N6-succinyllysine modification. The residue at position 36 (S36) is a Phosphoserine. T39 is subject to Phosphothreonine. Residue R43 participates in beta-D-fructose 1,6-bisphosphate binding. At S89 the chain carries Phosphoserine. T119 carries the post-translational modification Phosphothreonine. K121 is subject to N6-succinyllysine. The residue at position 132 (S132) is a Phosphoserine. E188 serves as the catalytic Proton acceptor. Residue K230 is the Schiff-base intermediate with dihydroxyacetone-P of the active site. A phosphoserine mark is found at S272, S276, S299, and S301. S272–G274 serves as a coordination point for beta-D-fructose 1,6-bisphosphate. R304 provides a ligand contact to beta-D-fructose 1,6-bisphosphate. Residue S309 is modified to Phosphoserine. Residue K317 is modified to N6-succinyllysine.

The protein belongs to the class I fructose-bisphosphate aldolase family. As to quaternary structure, homotetramer. Interacts with BBS1, BBS2, BBS4 and BBS7. Forms a ternary complex with G6PD and TP53; this interaction is direct.

The protein localises to the cytoplasm. It localises to the cytosol. The protein resides in the cytoskeleton. Its subcellular location is the microtubule organizing center. It is found in the centrosome. The protein localises to the centriolar satellite. It carries out the reaction beta-D-fructose 1,6-bisphosphate = D-glyceraldehyde 3-phosphate + dihydroxyacetone phosphate. The enzyme catalyses beta-D-fructose 1-phosphate = D-glyceraldehyde + dihydroxyacetone phosphate. It participates in carbohydrate degradation; glycolysis; D-glyceraldehyde 3-phosphate and glycerone phosphate from D-glucose: step 4/4. The protein operates within carbohydrate biosynthesis; gluconeogenesis. It functions in the pathway carbohydrate metabolism; fructose metabolism. Functionally, catalyzes the aldol cleavage of fructose 1,6-biphosphate to form two triosephosphates dihydroxyacetone phosphate and D-glyceraldehyde 3-phosphate in glycolysis as well as the reverse stereospecific aldol addition reaction in gluconeogenesis. In fructolysis, metabolizes fructose 1-phosphate derived from the phosphorylation of dietary fructose by fructokinase into dihydroxyacetone phosphate and D-glyceraldehyde. Acts as an adapter independently of its enzymatic activity, exerts a tumor suppressor role by stabilizing the ternary complex with G6PD and TP53 to inhibit G6PD activity and keep oxidative pentose phosphate metabolism in check. This chain is Fructose-bisphosphate aldolase B (ALDOB), found in Oryctolagus cuniculus (Rabbit).